The chain runs to 485 residues: Zinc finger SWIM domain-containing protein 1 (485 aa).

The SWIM-type zinc finger occupies 363 to 405 (MNIQILEDTHKVQPQPPASCSCYFNQAFHLPCRHILAMLSARR).

The chain is Zinc finger SWIM domain-containing protein 1 (ZSWIM1) from Homo sapiens (Human).